A 239-amino-acid chain; its full sequence is Ribosomal RNA small subunit methyltransferase G (239 aa).

S-adenosyl-L-methionine contacts are provided by residues Gly77, Phe82, 128–129, and Arg146; that span reads AE. The segment at 217-239 is disordered; that stretch reads RRQTSKKYPRKPGTPNKSPLVES.

Belongs to the methyltransferase superfamily. RNA methyltransferase RsmG family.

It is found in the cytoplasm. Its function is as follows. Specifically methylates the N7 position of guanine in position 535 of 16S rRNA. The sequence is that of Ribosomal RNA small subunit methyltransferase G from Staphylococcus epidermidis (strain ATCC 12228 / FDA PCI 1200).